A 305-amino-acid polypeptide reads, in one-letter code: tRNA dimethylallyltransferase 2 (305 aa).

14–21 (GPTASGKT) contacts ATP. Residue 16–21 (TASGKT) participates in substrate binding. Residues 39-42 (DSRQ) are interaction with substrate tRNA.

Belongs to the IPP transferase family. Monomer. Mg(2+) is required as a cofactor.

It catalyses the reaction adenosine(37) in tRNA + dimethylallyl diphosphate = N(6)-dimethylallyladenosine(37) in tRNA + diphosphate. Its function is as follows. Catalyzes the transfer of a dimethylallyl group onto the adenine at position 37 in tRNAs that read codons beginning with uridine, leading to the formation of N6-(dimethylallyl)adenosine (i(6)A). This Trichlorobacter lovleyi (strain ATCC BAA-1151 / DSM 17278 / SZ) (Geobacter lovleyi) protein is tRNA dimethylallyltransferase 2.